The sequence spans 128 residues: Glycine cleavage system H protein (128 aa).

In terms of domain architecture, Lipoyl-binding spans 22–104 (TVLVGITDYA…YGEGWIFRLK (83 aa)). At Lys-63 the chain carries N6-lipoyllysine.

Belongs to the GcvH family. The glycine cleavage system is composed of four proteins: P, T, L and H. (R)-lipoate is required as a cofactor.

Functionally, the glycine cleavage system catalyzes the degradation of glycine. The H protein shuttles the methylamine group of glycine from the P protein to the T protein. This is Glycine cleavage system H protein from Thermus thermophilus (strain ATCC BAA-163 / DSM 7039 / HB27).